Consider the following 29-residue polypeptide: Cyclotide mela-4 (29 aa).

The cyclopeptide (Gly-Asn) cross-link spans 1–29; sequence GKPICGETCFKGKCYTPGCTCSYPICKKN. Intrachain disulfides connect C5–C19, C9–C21, and C14–C26.

This is a cyclic peptide. In terms of processing, contains 3 disulfide bonds.

In terms of biological role, probably participates in a plant defense mechanism (Potential). Binds to and induces leakage in phospholipd membranes, particularly ones containing 1-palmitoyl-2-oleophosphatidylethanolamine (POPE). In vitro, displays cytotoxicity against cultured cells. Not active against Gram-negative bacterium E.coli ATCC 25922 or Gram-positive bacterium S.aureus ATCC 25923 up to a concentration of 64 uM. This chain is Cyclotide mela-4, found in Melicytus latifolius (Norfolk Island mahoe).